Reading from the N-terminus, the 681-residue chain is DNA ligase (681 aa).

NAD(+)-binding positions include 35 to 39 (DAEYD), 84 to 85 (SL), and Glu-115. Catalysis depends on Lys-117, which acts as the N6-AMP-lysine intermediate. NAD(+)-binding residues include Arg-138, Glu-175, Lys-293, and Lys-317. Zn(2+)-binding residues include Cys-411, Cys-414, Cys-429, and Cys-435. The BRCT domain occupies 598–681 (RTNLAVPGKT…SLLRDTSSSE (84 aa)).

This sequence belongs to the NAD-dependent DNA ligase family. LigA subfamily. Requires Mg(2+) as cofactor. It depends on Mn(2+) as a cofactor.

The enzyme catalyses NAD(+) + (deoxyribonucleotide)n-3'-hydroxyl + 5'-phospho-(deoxyribonucleotide)m = (deoxyribonucleotide)n+m + AMP + beta-nicotinamide D-nucleotide.. DNA ligase that catalyzes the formation of phosphodiester linkages between 5'-phosphoryl and 3'-hydroxyl groups in double-stranded DNA using NAD as a coenzyme and as the energy source for the reaction. It is essential for DNA replication and repair of damaged DNA. The chain is DNA ligase from Nitrosomonas europaea (strain ATCC 19718 / CIP 103999 / KCTC 2705 / NBRC 14298).